Here is a 305-residue protein sequence, read N- to C-terminus: Probable L-ribulose-5-phosphate 3-epimerase UlaE (305 aa).

It belongs to the L-ribulose-5-phosphate 3-epimerase family.

The catalysed reaction is L-ribulose 5-phosphate = L-xylulose 5-phosphate. The protein operates within cofactor degradation; L-ascorbate degradation; D-xylulose 5-phosphate from L-ascorbate: step 3/4. Its function is as follows. Catalyzes the isomerization of L-xylulose-5-phosphate to L-ribulose-5-phosphate. Is involved in the anaerobic L-ascorbate utilization. In Mycoplasma pneumoniae (strain ATCC 29342 / M129 / Subtype 1) (Mycoplasmoides pneumoniae), this protein is Probable L-ribulose-5-phosphate 3-epimerase UlaE (ulaE).